A 130-amino-acid chain; its full sequence is Small ribosomal subunit protein uS8 (130 aa).

It belongs to the universal ribosomal protein uS8 family. In terms of assembly, part of the 30S ribosomal subunit. Contacts proteins S5 and S12.

Its function is as follows. One of the primary rRNA binding proteins, it binds directly to 16S rRNA central domain where it helps coordinate assembly of the platform of the 30S subunit. This chain is Small ribosomal subunit protein uS8, found in Ruegeria sp. (strain TM1040) (Silicibacter sp.).